We begin with the raw amino-acid sequence, 350 residues long: UDP-glucose 4-epimerase (350 aa).

Residues 13–15 (GYI), 34–38 (DNLCN), 67–68 (DI), Phe89, and Lys93 contribute to the NAD(+) site. Residue 133–135 (SAT) coordinates substrate. Tyr158 (proton acceptor) is an active-site residue. NAD(+) contacts are provided by Lys162 and Tyr186. Residues 186-188 (YFN), 207-209 (NNL), 225-227 (SVY), Arg240, and 303-306 (RSGD) each bind substrate.

Belongs to the NAD(P)-dependent epimerase/dehydratase family. As to quaternary structure, homodimer. Requires NAD(+) as cofactor.

It catalyses the reaction UDP-alpha-D-glucose = UDP-alpha-D-galactose. The enzyme catalyses UDP-N-acetyl-alpha-D-glucosamine = UDP-N-acetyl-alpha-D-galactosamine. It participates in carbohydrate metabolism; galactose metabolism. In terms of biological role, catalyzes two distinct but analogous reactions: the reversible epimerization of UDP-glucose to UDP-galactose and the reversible epimerization of UDP-N-acetylglucosamine to UDP-N-acetylgalactosamine. The reaction with UDP-Gal plays a critical role in the Leloir pathway of galactose catabolism in which galactose is converted to the glycolytic intermediate glucose 6-phosphate. It contributes to the catabolism of dietary galactose and enables the endogenous biosynthesis of both UDP-Gal and UDP-GalNAc when exogenous sources are limited. Both UDP-sugar interconversions are important in the synthesis of glycoproteins and glycolipids. The polypeptide is UDP-glucose 4-epimerase (Gale) (Drosophila melanogaster (Fruit fly)).